The sequence spans 168 residues: Endoribonuclease YbeY (168 aa).

Zn(2+) contacts are provided by His132, His136, and His142.

Belongs to the endoribonuclease YbeY family. It depends on Zn(2+) as a cofactor.

The protein resides in the cytoplasm. Single strand-specific metallo-endoribonuclease involved in late-stage 70S ribosome quality control and in maturation of the 3' terminus of the 16S rRNA. This Clostridium perfringens (strain SM101 / Type A) protein is Endoribonuclease YbeY.